Here is a 1717-residue protein sequence, read N- to C-terminus: Protein MON2 homolog (1717 aa).

Serine 2 is modified (N-acetylserine). 2 positions are modified to phosphoserine: serine 205 and serine 537. A disordered region spans residues 511–538 (ETECQTTTEEGSSPTQSTEQQDLQSTSD). The span at 522–538 (SSPTQSTEQQDLQSTSD) shows a compositional bias: polar residues.

The protein belongs to the MON2 family. In terms of assembly, homooligomer. Heterotrimer with ATP9A and DOP1B; this interaction is retromer-independent. Interacts with SNX3.

The protein resides in the early endosome membrane. Its function is as follows. Plays a role in regulating membrane trafficking of cargo proteins. Together with ATP9A and DOP1B, regulates SNX3 retromer-mediated endosomal sorting of WLS away from lysosomal degradation. The sequence is that of Protein MON2 homolog from Homo sapiens (Human).